A 223-amino-acid chain; its full sequence is Ribose-5-phosphate isomerase A (223 aa).

Substrate is bound by residues 32–35 (TGST), 85–88 (DGAD), and 98–101 (KGGG). E107 (proton acceptor) is an active-site residue. Residue K125 participates in substrate binding.

Belongs to the ribose 5-phosphate isomerase family. Homodimer.

The catalysed reaction is aldehydo-D-ribose 5-phosphate = D-ribulose 5-phosphate. It participates in carbohydrate degradation; pentose phosphate pathway; D-ribose 5-phosphate from D-ribulose 5-phosphate (non-oxidative stage): step 1/1. Catalyzes the reversible conversion of ribose-5-phosphate to ribulose 5-phosphate. The sequence is that of Ribose-5-phosphate isomerase A from Pseudomonas aeruginosa (strain LESB58).